The chain runs to 338 residues: DNA-directed RNA polymerase subunit alpha (338 aa).

Residues 1 to 234 (MIQKNWQELT…DQLNVFVNFE (234 aa)) form an alpha N-terminal domain (alpha-NTD) region. The interval 250-338 (FNPALLKKVD…DLAKRFEEHY (89 aa)) is alpha C-terminal domain (alpha-CTD).

This sequence belongs to the RNA polymerase alpha chain family. As to quaternary structure, homodimer. The RNAP catalytic core consists of 2 alpha, 1 beta, 1 beta' and 1 omega subunit. When a sigma factor is associated with the core the holoenzyme is formed, which can initiate transcription.

The enzyme catalyses RNA(n) + a ribonucleoside 5'-triphosphate = RNA(n+1) + diphosphate. Its function is as follows. DNA-dependent RNA polymerase catalyzes the transcription of DNA into RNA using the four ribonucleoside triphosphates as substrates. The chain is DNA-directed RNA polymerase subunit alpha from Methylocella silvestris (strain DSM 15510 / CIP 108128 / LMG 27833 / NCIMB 13906 / BL2).